A 209-amino-acid chain; its full sequence is Probable spore germination lipoprotein YlaJ (209 aa).

An N-terminal signal peptide occupies residues 1-16 (MRILFIIIQLTLILSA). C17 is lipidated: N-palmitoyl cysteine. C17 carries S-diacylglycerol cysteine lipidation. 2 disordered regions span residues 26–54 (QNVE…KDNG) and 165–209 (NDVI…NNND). Basic and acidic residues-rich tracts occupy residues 28-54 (VEKE…KDNG) and 183-209 (LNRK…NNND).

The protein localises to the forespore inner membrane. Functionally, probably contributes, directly or indirectly, to early events in germination. This Bacillus subtilis (strain 168) protein is Probable spore germination lipoprotein YlaJ (ylaJ).